The following is a 793-amino-acid chain: Caldesmon (793 aa).

R12 carries the phosphoserine modification. E21 is modified (phosphotyrosine). Disordered regions lie at residues 26-94, 108-407, and 434-458; these read AYQR…DDEA, QKRL…IKGE, and KKQG…KPTF. Residues 26–207 form a myosin and calmodulin-binding region; the sequence is AYQRNDDDEE…PKRGSIGENQ (182 aa). Over residues 47-56 the composition is skewed to basic and acidic residues; the sequence is QERLRQKQEE. Polar residues predominate over residues 60–74; sequence GQVTDQVEVNAQNSV. Residues 108–122 are compositionally biased toward basic and acidic residues; it reads QKRLQEALERQKEFD. At S129 the chain carries Phosphoserine. Composition is skewed to basic and acidic residues over residues 146–162 and 173–188; these read TTEK…RYEI and QKND…KEDK. Residues E196 and S202 each carry the phosphoserine modification. Glycyl lysine isopeptide (Lys-Gly) (interchain with G-Cter in SUMO2) cross-links involve residues I203 and E209. Composition is skewed to basic and acidic residues over residues 236-407 and 435-458; these read EEPK…IKGE and KQGE…KPTF. Tandem repeats lie at residues 319–332, 333–346, and 347–360. Positions 319-375 are 3 X 14 AA tandem repeats of E-E-E-K-R-A-A-E-E-R-Q-R-I-K; sequence EEEKRAAEERQRIKEEEKRAAEERQRIKEEEKRAAEERQRIKEEEKRAAEERQRARA. K459 is covalently cross-linked (Glycyl lysine isopeptide (Lys-Gly) (interchain with G-Cter in SUMO2)). Positions 492–640 are disordered; that stretch reads KSQNGEFMTH…KKPFKCFTPK (149 aa). Basic and acidic residues-rich tracts occupy residues 532 to 558 and 566 to 633; these read AGKR…KQKQ and EELK…DKKP. Residues 564–621 are tropomyosin-binding; it reads ELEELKKKREERRKVLEEEEQRRKQEEADRKLREEEEKRRLKEEIERRRAEAAEKRQK. Residue S643 is modified to Phosphoserine. Residue K645 forms a Glycyl lysine isopeptide (Lys-Gly) (interchain with G-Cter in SUMO2) linkage. The tract at residues 653-686 is strong actin-binding; that stretch reads LNKSVQKSSGVKSTHQAAIVSKIDSRLEQYTSAI. S656 carries the post-translational modification Phosphoserine. A tropomyosin-binding region spans residues 664 to 674; the sequence is KSTHQAAIVSK. Disordered stretches follow at residues 687 to 706, 721 to 740, and 747 to 793; these read EGTK…PVPA, VFSS…GLKV, and NEWL…PTKV. Residues 716–722 are calmodulin-binding; the sequence is WEKGNVF. Polar residues predominate over residues 721 to 733; sequence VFSSPTAAGTPNK. Position 724 is a phosphoserine (S724). A phosphothreonine mark is found at T730 and T753. At S759 the chain carries Phosphoserine. The segment covering 765–784 has biased composition (basic and acidic residues); that stretch reads SDLRPGDVSSKRNLWEKQSV. The segment at 768–793 is weak actin-binding; sequence RPGDVSSKRNLWEKQSVDKVTSPTKV. S789 is subject to Phosphoserine.

Belongs to the caldesmon family. Post-translationally, in non-muscle cells, phosphorylation by CDK1 during mitosis causes caldesmon to dissociate from microfilaments. Phosphorylation reduces caldesmon binding to actin, myosin, and calmodulin as well as its inhibition of actomyosin ATPase activity. Phosphorylation also occurs in both quiescent and dividing smooth muscle cells with similar effects on the interaction with actin and calmodulin and on microfilaments reorganization. CDK1-mediated phosphorylation promotes Schwann cell migration during peripheral nerve regeneration. As to expression, high-molecular-weight caldesmon (isoform 1) is predominantly expressed in smooth muscles, whereas low-molecular-weight caldesmon (isoforms 2, 3, 4 and 5) are widely distributed in non-muscle tissues and cells. Not expressed in skeletal muscle or heart.

The protein resides in the cytoplasm. Its subcellular location is the cytoskeleton. The protein localises to the myofibril. It is found in the stress fiber. Its function is as follows. Actin- and myosin-binding protein implicated in the regulation of actomyosin interactions in smooth muscle and nonmuscle cells (could act as a bridge between myosin and actin filaments). Stimulates actin binding of tropomyosin which increases the stabilization of actin filament structure. In muscle tissues, inhibits the actomyosin ATPase by binding to F-actin. This inhibition is attenuated by calcium-calmodulin and is potentiated by tropomyosin. Interacts with actin, myosin, two molecules of tropomyosin and with calmodulin. Also plays an essential role during cellular mitosis and receptor capping. Involved in Schwann cell migration during peripheral nerve regeneration. The sequence is that of Caldesmon (CALD1) from Homo sapiens (Human).